Here is a 248-residue protein sequence, read N- to C-terminus: Mannose-binding protein C (248 aa).

The N-terminal stretch at 1–20 (MSPFLSLPLLLLSVLSASYS) is a signal peptide. Residues 36–112 (IACSSPGING…GDSSLAASER (77 aa)) are disordered. The region spanning 42-99 (GINGFPGKDGRDGTKGEKGEPGQGLRGLQGPPGKLGPPGNPGPSGSPGAKGQKGDPGA) is the Collagen-like domain. A 4-hydroxyproline modification is found at Pro47. Residues 49–61 (KDGRDGTKGEKGE) are compositionally biased toward basic and acidic residues. A 4-hydroxyproline mark is found at Pro73, Pro79, Pro82, and Pro88. Residues 112–130 (RKALQTEMARIKKWVTFSL) adopt a coiled-coil conformation. The C-type lectin domain occupies 134–245 (VGKKLFLSNG…CSSSHLAICE (112 aa)). 2 cysteine pairs are disulfide-bonded: Cys155-Cys244 and Cys222-Cys236.

Oligomeric complex of 3 or more homotrimers. Interacts with MASP1 and MASP2. Interacts with MEP1A and MEP1B and may inhibit their catalytic activity. In terms of processing, hydroxylation on proline residues within the sequence motif, GXPG, is most likely to be 4-hydroxy as this fits the requirement for 4-hydroxylation in vertebrates.

It is found in the secreted. Calcium-dependent lectin involved in innate immune defense. Binds mannose, fucose and N-acetylglucosamine on different microorganisms and activates the lectin complement pathway. Binds to late apoptotic cells, as well as to apoptotic blebs and to necrotic cells, but not to early apoptotic cells, facilitating their uptake by macrophages. This chain is Mannose-binding protein C (MBL2), found in Saguinus oedipus (Cotton-top tamarin).